Here is a 551-residue protein sequence, read N- to C-terminus: Glucans biosynthesis protein D (551 aa).

Positions 1–32 (MNRRRFIKASLALAAACGTPGLATLFSRNAWA) form a signal peptide, tat-type signal.

This sequence belongs to the OpgD/OpgG family. Post-translationally, predicted to be exported by the Tat system. The position of the signal peptide cleavage has not been experimentally proven.

It is found in the periplasm. It participates in glycan metabolism; osmoregulated periplasmic glucan (OPG) biosynthesis. Its function is as follows. Probably involved in the control of the structural glucose backbone of osmoregulated periplasmic glucans (OPGs). In Cronobacter sakazakii (strain ATCC BAA-894) (Enterobacter sakazakii), this protein is Glucans biosynthesis protein D.